Reading from the N-terminus, the 599-residue chain is Endoribonuclease ZC3H12A (599 aa).

Residues 1-40 (MSGPCGEKPVLEASPTMSLWEFEDSHSRQGTPRPGQELAA) form a disordered region. Residues 42–87 (EASALELQMKVDFFRKLGYSSTEIHSVLQKLGVQADTNTVLGELVK) form a ubiquitin association domain region. Residues 81–150 (VLGELVKHGT…DGSNVAMSHG (70 aa)) form a necessary for interaction with TANK region. The disordered stretch occupies residues 90-133 (TATERERQTSPDPCPQLPLVPRGGGTPKAPNLEPPLPEEEKEGS). A Phosphoserine modification is found at S99. Residues 112–297 (GGGTPKAPNL…LDNFLRKKPL (186 aa)) form an RNase region. In terms of domain architecture, RNase NYN spans 135 to 290 (LRPVVIDGSN…LGRHGPSLDN (156 aa)). Residues 214–220 (RRVGGKR) are RNA binding. D226 contributes to the Mg(2+) binding site. The segment at 301 to 324 (HRKQPCPYGRKCTYGIKCRFFHPE) adopts a C3H1-type zinc-finger fold. A necessary for interaction with ZC3H12D region spans residues 301–457 (HRKQPCPYGR…SELWGVRGGG (157 aa)). Residues 343 to 420 (LSPPRAPSKD…SGSSFGPTDW (78 aa)) form a disordered region. S344 carries the post-translational modification Phosphoserine. Residues 358 to 375 (PSPSSQSSSLLTESEQCS) are compositionally biased toward low complexity. Residues 386 to 399 (SPGSRQEGLTQTYA) show a composition bias toward polar residues. A phosphoserine mark is found at S438 and S442. Residues 522–546 (PPPTSVLQEPPVQSPGAGRSPWGRA) are disordered.

Belongs to the ZC3H12 family. Oligomer. Found in a deubiquitination complex with TANK, USP10 and ZC3H12A; this complex inhibits genotoxic stress- or interleukin-1-beta-mediated NF-kappaB activation by promoting IKBKG or TRAF6 deubiquitination. Interacts with IKBKG; this interaction increases in response to DNA damage. Interacts with TANK; this interaction increases in response to DNA damage and serves as a bridge to anchor both TANK and USP10 into a deubiquitinating complex. Interacts with TRAF6; this interaction increases in response to DNA damage and is stimulated by TANK. Interacts with USP10; this interaction increases in response to DNA damage and serves as a bridge to anchor both TANK and USP10 into a deubiquitinating complex. Interacts with ZC3H12D. Interacts with TNRC6A. Interacts with IKBKB/IKKB. Interacts with IKBKB/IKKB. Interacts with BTRC; the interaction occurs when ZC3H12A is phosphorylated in a IKBKB/IKKB-dependent manner. Interacts with IRAK1; this interaction increases the interaction between ZC3H12A and IKBKB/IKKB. Interacts with UPF1; this interaction occurs in a mRNA translationally active- and termination-dependent manner and is essential for ZC3H12A-mediated degradation of target mRNAs. Associates with ribosomes. Interacts with ubiquitin. As to quaternary structure, (Microbial infection) Oligomerization is necessary for antiviral activity. Requires Mg(2+) as cofactor. In terms of processing, phosphorylated by IRAK1; phosphorylation is necessary for subsequent phosphorylation by the I-kappa-B-kinase (IKK) complex. Phosphorylated by I-kappa-B-kinase (IKK) subunits IKBKB/IKKB and CHUK/IKKA at Ser-438 and Ser-442; these phosphorylations promote ubiquitin proteasome-mediated degradation of ZC3H12A and hence facilitates rapid and robust production of IL-6 mRNA in response to toll-like receptor (TLR) or IL-1 receptor stimuli. Post-translationally, (Microbial infection) Rapidly degraded in activated T-cells in response to phorbol 13-acetate 12-myristate (PMA) during HIV-1 viral infection. Ubiquitinated; ubiquitination is induced in response to interleukin IL1 receptor stimuli in a IKBKB/IKKB and IRAK1-dependent manner, leading to proteasome-mediated degradation. In terms of processing, proteolytically cleaved between Arg-111 and Arg-214 by MALT1 in activated T-cells; cleavage at Arg-111 is critical for promoting ZC3H12A degradation in response to T-cell receptor (TCR) stimulation, and hence is necessary for prolonging the stability of a set of mRNAs controlling T-cell activation and Th17 cell differentiation. In terms of tissue distribution, expressed in heart, placenta, spleen, kidney, liver and lung. Expressed in leukocytes. Expressed in monocyte.

Its subcellular location is the nucleus. It is found in the cytoplasm. The protein localises to the P-body. The protein resides in the rough endoplasmic reticulum membrane. It localises to the cytoplasmic granule. Its function is as follows. Endoribonuclease involved in various biological functions such as cellular inflammatory response and immune homeostasis, glial differentiation of neuroprogenitor cells, cell death of cardiomyocytes, adipogenesis and angiogenesis. Functions as an endoribonuclease involved in mRNA decay. Modulates the inflammatory response by promoting the degradation of a set of translationally active cytokine-induced inflammation-related mRNAs, such as IL6 and IL12B, during the early phase of inflammation. Prevents aberrant T-cell-mediated immune reaction by degradation of multiple mRNAs controlling T-cell activation, such as those encoding cytokines (IL6 and IL2), cell surface receptors (ICOS, TNFRSF4 and TNFR2) and transcription factor (REL). Inhibits cooperatively with ZC3H12A the differentiation of helper T cells Th17 in lungs. They repress target mRNA encoding the Th17 cell-promoting factors IL6, ICOS, REL, IRF4, NFKBID and NFKBIZ. The cooperation requires RNA-binding by RC3H1 and the nuclease activity of ZC3H12A. Together with RC3H1, destabilizes TNFRSF4/OX40 mRNA by binding to the conserved stem loop structure in its 3'UTR. Self regulates by destabilizing its own mRNA. Cleaves mRNA harboring a stem-loop (SL), often located in their 3'-UTRs, during the early phase of inflammation in a helicase UPF1-dependent manner. Plays a role in the inhibition of microRNAs (miRNAs) biogenesis. Cleaves the terminal loop of a set of precursor miRNAs (pre-miRNAs) important for the regulation of the inflammatory response leading to their degradation, and thus preventing the biosynthesis of mature miRNAs. Also plays a role in promoting angiogenesis in response to inflammatory cytokines by inhibiting the production of antiangiogenic microRNAs via its anti-dicer RNase activity. Affects the overall ubiquitination of cellular proteins. Positively regulates deubiquitinase activity promoting the cleavage at 'Lys-48'- and 'Lys-63'-linked polyubiquitin chains on TNF receptor-associated factors (TRAFs), preventing JNK and NF-kappa-B signaling pathway activation, and hence negatively regulating macrophage-mediated inflammatory response and immune homeostasis. Also induces deubiquitination of the transcription factor HIF1A, probably leading to its stabilization and nuclear import, thereby positively regulating the expression of proangiogenic HIF1A-targeted genes. Involved in a TANK-dependent negative feedback response to attenuate NF-kappaB activation through the deubiquitination of IKBKG or TRAF6 in response to interleukin-1-beta (IL1B) stimulation or upon DNA damage. Prevents stress granule (SGs) formation and promotes macrophage apoptosis under stress conditions, including arsenite-induced oxidative stress, heat shock and energy deprivation. Plays a role in the regulation of macrophage polarization; promotes IL4-induced polarization of macrophages M1 into anti-inflammatory M2 state. May also act as a transcription factor that regulates the expression of multiple genes involved in inflammatory response, angiogenesis, adipogenesis and apoptosis. Functions as a positive regulator of glial differentiation of neuroprogenitor cells through an amyloid precursor protein (APP)-dependent signaling pathway. Attenuates septic myocardial contractile dysfunction in response to lipopolysaccharide (LPS) by reducing I-kappa-B-kinase (IKK)-mediated NF-kappa-B activation, and hence myocardial pro-inflammatory cytokine production. Functionally, (Microbial infection) Binds to Japanese encephalitis virus (JEV) and Dengue virus (DEN) RNAs. In terms of biological role, (Microbial infection) Exhibits antiviral activity against HIV-1 in lymphocytes by decreasing the abundance of HIV-1 viral RNA species. The sequence is that of Endoribonuclease ZC3H12A from Homo sapiens (Human).